Consider the following 652-residue polypeptide: UvrABC system protein C (652 aa).

The GIY-YIG domain maps to 37–116; that stretch reads KSSGCYLFKD…IKTNKPYFNI (80 aa). Positions 226–261 constitute a UVR domain; it reads DDLEIFLQKKMLQFSNDLDYENAAKIRDQISGLKLL.

Belongs to the UvrC family. As to quaternary structure, interacts with UvrB in an incision complex.

It is found in the cytoplasm. Its function is as follows. The UvrABC repair system catalyzes the recognition and processing of DNA lesions. UvrC both incises the 5' and 3' sides of the lesion. The N-terminal half is responsible for the 3' incision and the C-terminal half is responsible for the 5' incision. This chain is UvrABC system protein C, found in Prochlorococcus marinus (strain MIT 9312).